The primary structure comprises 423 residues: tRNA(Ile)-lysidine synthase (423 aa).

43–48 (SSGVDS) serves as a coordination point for ATP.

It belongs to the tRNA(Ile)-lysidine synthase family.

It is found in the cytoplasm. The catalysed reaction is cytidine(34) in tRNA(Ile2) + L-lysine + ATP = lysidine(34) in tRNA(Ile2) + AMP + diphosphate + H(+). Its function is as follows. Ligates lysine onto the cytidine present at position 34 of the AUA codon-specific tRNA(Ile) that contains the anticodon CAU, in an ATP-dependent manner. Cytidine is converted to lysidine, thus changing the amino acid specificity of the tRNA from methionine to isoleucine. The polypeptide is tRNA(Ile)-lysidine synthase (Helicobacter hepaticus (strain ATCC 51449 / 3B1)).